The chain runs to 86 residues: Small ribosomal subunit protein bS20 (86 aa).

The tract at residues 1–27 (MANNKSAKKRAIQAEKRRQHNASRRSM) is disordered.

This sequence belongs to the bacterial ribosomal protein bS20 family.

Its function is as follows. Binds directly to 16S ribosomal RNA. The protein is Small ribosomal subunit protein bS20 of Vibrio vulnificus (strain CMCP6).